A 308-amino-acid chain; its full sequence is Aspartate carbamoyltransferase catalytic subunit (308 aa).

Carbamoyl phosphate is bound by residues Arg-57 and Thr-58. L-aspartate is bound at residue Lys-86. Carbamoyl phosphate-binding residues include Arg-107, His-135, and Gln-138. Arg-167 and Arg-228 together coordinate L-aspartate. Leu-267 and Pro-268 together coordinate carbamoyl phosphate.

It belongs to the aspartate/ornithine carbamoyltransferase superfamily. ATCase family. Heterooligomer of catalytic and regulatory chains.

It catalyses the reaction carbamoyl phosphate + L-aspartate = N-carbamoyl-L-aspartate + phosphate + H(+). Its pathway is pyrimidine metabolism; UMP biosynthesis via de novo pathway; (S)-dihydroorotate from bicarbonate: step 2/3. Its function is as follows. Catalyzes the condensation of carbamoyl phosphate and aspartate to form carbamoyl aspartate and inorganic phosphate, the committed step in the de novo pyrimidine nucleotide biosynthesis pathway. The sequence is that of Aspartate carbamoyltransferase catalytic subunit from Methanosarcina acetivorans (strain ATCC 35395 / DSM 2834 / JCM 12185 / C2A).